The primary structure comprises 382 residues: ATP phosphoribosyltransferase regulatory subunit (382 aa).

It belongs to the class-II aminoacyl-tRNA synthetase family. HisZ subfamily. Heteromultimer composed of HisG and HisZ subunits.

It localises to the cytoplasm. It participates in amino-acid biosynthesis; L-histidine biosynthesis; L-histidine from 5-phospho-alpha-D-ribose 1-diphosphate: step 1/9. In terms of biological role, required for the first step of histidine biosynthesis. May allow the feedback regulation of ATP phosphoribosyltransferase activity by histidine. In Burkholderia ambifaria (strain MC40-6), this protein is ATP phosphoribosyltransferase regulatory subunit.